A 141-amino-acid polypeptide reads, in one-letter code: Prefoldin subunit alpha (141 aa).

This sequence belongs to the prefoldin subunit alpha family. In terms of assembly, heterohexamer of two alpha and four beta subunits.

It localises to the cytoplasm. Functionally, molecular chaperone capable of stabilizing a range of proteins. Seems to fulfill an ATP-independent, HSP70-like function in archaeal de novo protein folding. This Methanothermobacter thermautotrophicus (strain ATCC 29096 / DSM 1053 / JCM 10044 / NBRC 100330 / Delta H) (Methanobacterium thermoautotrophicum) protein is Prefoldin subunit alpha (pfdA).